The following is a 218-amino-acid chain: GCN5-related N-acetyltransferase 9 (218 aa).

The region spanning 36 to 183 is the N-acetyltransferase domain; it reads SALLEATGSE…KEVTLEYPVT (148 aa). Residues 112-114, 120-125, 152-154, and Phe159 each bind acetyl-CoA; these read MIA, GKGLGK, and NTA.

It belongs to the acetyltransferase family. GNAT subfamily. Oligomer. Expressed throughout the plant.

It localises to the cytoplasm. The protein resides in the nucleus. It carries out the reaction an N-terminal L-alpha-aminoacyl-[protein] + acetyl-CoA = N-terminal N(alpha)-acetyl-L-alpha-aminoacyl-[protein] + CoA + H(+). The enzyme catalyses L-lysyl-[protein] + acetyl-CoA = N(6)-acetyl-L-lysyl-[protein] + CoA + H(+). Probable protein acetyltransferase with dual specificity triggering both N-alpha-acetylation (NTA) and epsilon-lysine acetylation (KA). The protein is GCN5-related N-acetyltransferase 9 of Arabidopsis thaliana (Mouse-ear cress).